Reading from the N-terminus, the 95-residue chain is MKITKVAVAGTLESSDVQVRVQPFDSLDIEINSSVAKQFGEQIEATVREVLAKLGITAAQVIVEDKGALDCVLQARVKAAAMRATDEAINWEAVL.

S14 carries the post-translational modification O-(phosphoribosyl dephospho-coenzyme A)serine.

This sequence belongs to the CitD family. In terms of assembly, oligomer with a subunit composition of (alpha,beta,gamma)6.

It localises to the cytoplasm. Functionally, covalent carrier of the coenzyme of citrate lyase. The chain is Citrate lyase acyl carrier protein from Haemophilus influenzae (strain ATCC 51907 / DSM 11121 / KW20 / Rd).